A 184-amino-acid chain; its full sequence is UPF0149 protein PSEEN5316 (184 aa).

This sequence belongs to the UPF0149 family.

This chain is UPF0149 protein PSEEN5316, found in Pseudomonas entomophila (strain L48).